Here is a 91-residue protein sequence, read N- to C-terminus: Small ribosomal subunit protein uS17 (91 aa).

The protein belongs to the universal ribosomal protein uS17 family. Part of the 30S ribosomal subunit.

Functionally, one of the primary rRNA binding proteins, it binds specifically to the 5'-end of 16S ribosomal RNA. The polypeptide is Small ribosomal subunit protein uS17 (Acidithiobacillus ferrooxidans (strain ATCC 23270 / DSM 14882 / CIP 104768 / NCIMB 8455) (Ferrobacillus ferrooxidans (strain ATCC 23270))).